A 386-amino-acid chain; its full sequence is MSLKDFIFTSESVGEGHPDKVCDQISDAVLDAYLEQDPKSRVACETLVTTNLVVIAGEITSKGKVDAQEIARNVIRDIGYNDITMGFDADFAVVSAHVHAQSPDISQGVTEGEGLFKEQGAGDQGLMFGFAINETPELMPMPIYYSHELVKHLAGLRHGNKLKFLRPDAKSQVTVEYKDGKPVRIDTVVISTQHSPDVTHKQIEEALIEECIKKVIPANLLNNTKYFINPTGQFIIGGPHGDAGLTGRKIIVDTYGGYGRHGGGAFSGKDPSKVDRSAAYMGRYIAKNVVASGLADKCEVQLAYAIGVAEPVSVHVDTFGTGKISEEELVKRIRANFKLTPRGIIESLKLLEKGRKYRETASYGHFGRKGSTFTWEETDKASALKG.

His17 serves as a coordination point for ATP. Asp19 is a binding site for Mg(2+). Glu45 contributes to the K(+) binding site. Positions 58 and 101 each coordinate L-methionine. The segment at 101–111 is flexible loop; that stretch reads QSPDISQGVTE. ATP-binding positions include 168 to 170, Asp242, 248 to 249, Ala265, and Lys269; these read DAK and RK. Position 242 (Asp242) interacts with L-methionine. An L-methionine-binding site is contributed by Lys273.

It belongs to the AdoMet synthase family. Homotetramer; dimer of dimers. It depends on Mg(2+) as a cofactor. The cofactor is K(+).

It localises to the cytoplasm. It catalyses the reaction L-methionine + ATP + H2O = S-adenosyl-L-methionine + phosphate + diphosphate. Its pathway is amino-acid biosynthesis; S-adenosyl-L-methionine biosynthesis; S-adenosyl-L-methionine from L-methionine: step 1/1. Its function is as follows. Catalyzes the formation of S-adenosylmethionine (AdoMet) from methionine and ATP. The overall synthetic reaction is composed of two sequential steps, AdoMet formation and the subsequent tripolyphosphate hydrolysis which occurs prior to release of AdoMet from the enzyme. The polypeptide is S-adenosylmethionine synthase (Leptospira interrogans serogroup Icterohaemorrhagiae serovar copenhageni (strain Fiocruz L1-130)).